Here is a 162-residue protein sequence, read N- to C-terminus: Ribosomal RNA large subunit methyltransferase H (162 aa).

Residues Leu78, Gly109, and 128–133 (LSALTL) each bind S-adenosyl-L-methionine.

This sequence belongs to the RNA methyltransferase RlmH family. As to quaternary structure, homodimer.

It is found in the cytoplasm. The enzyme catalyses pseudouridine(1915) in 23S rRNA + S-adenosyl-L-methionine = N(3)-methylpseudouridine(1915) in 23S rRNA + S-adenosyl-L-homocysteine + H(+). Functionally, specifically methylates the pseudouridine at position 1915 (m3Psi1915) in 23S rRNA. The sequence is that of Ribosomal RNA large subunit methyltransferase H from Psychrobacter arcticus (strain DSM 17307 / VKM B-2377 / 273-4).